The primary structure comprises 380 residues: Succinate--CoA ligase [ADP-forming] subunit beta (380 aa).

In terms of domain architecture, ATP-grasp spans 9–237; that stretch reads RDLLARFGIP…PSAEPEAERR (229 aa). ATP contacts are provided by residues K45, 52–54, V94, and E99; that span reads GRG. The Mg(2+) site is built by N192 and D206. Substrate is bound by residues N257 and 314 to 316; that span reads GIT.

It belongs to the succinate/malate CoA ligase beta subunit family. Heterotetramer of two alpha and two beta subunits. Mg(2+) serves as cofactor.

The enzyme catalyses succinate + ATP + CoA = succinyl-CoA + ADP + phosphate. The catalysed reaction is GTP + succinate + CoA = succinyl-CoA + GDP + phosphate. It functions in the pathway carbohydrate metabolism; tricarboxylic acid cycle; succinate from succinyl-CoA (ligase route): step 1/1. Succinyl-CoA synthetase functions in the citric acid cycle (TCA), coupling the hydrolysis of succinyl-CoA to the synthesis of either ATP or GTP and thus represents the only step of substrate-level phosphorylation in the TCA. The beta subunit provides nucleotide specificity of the enzyme and binds the substrate succinate, while the binding sites for coenzyme A and phosphate are found in the alpha subunit. This chain is Succinate--CoA ligase [ADP-forming] subunit beta, found in Chloroflexus aurantiacus (strain ATCC 29366 / DSM 635 / J-10-fl).